Reading from the N-terminus, the 966-residue chain is Receptor protein-tyrosine kinase CEPR1 (966 aa).

The first 22 residues, 1 to 22, serve as a signal peptide directing secretion; it reads MRLKNFPFFVLFFFFCFNSNQS. Residues 23–592 lie on the Extracellular side of the membrane; sequence WGLMSSNQQP…QEPHGKKKLS (570 aa). Asn-61 carries an N-linked (GlcNAc...) asparagine glycan. LRR repeat units lie at residues 70–94, 95–120, 122–144, 145–168, 170–194, 195–218, 219–242, 245–267, 268–291, 292–315, 317–339, 341–363, 365–386, 387–411, 412–435, 437–459, 460–483, 484–507, 508–531, and 533–554; these read QGLV…VCSY, FPNL…TIPN, SLLR…FSQM, KSLR…IFNL, DLEY…VSKL, TKLT…IGNL, TSLV…IGNL, LRQL…IGNL, KNLT…ICSL, PNLR…LGNS, TLKI…LGSS, PMIA…VCKS, KLLY…TYGS, CKTL…VMSL, PHVS…IGNA, NLSE…LSHS, TNLV…VGRL, RKLN…LSNL, KSLN…LSEL, and PTSI…LIRG. N-linked (GlcNAc...) asparagine glycosylation is found at Asn-109, Asn-120, Asn-128, and Asn-167. N-linked (GlcNAc...) asparagine glycosylation is found at Asn-217 and Asn-241. Asn-269 and Asn-301 each carry an N-linked (GlcNAc...) asparagine glycan. N-linked (GlcNAc...) asparagine glycosylation occurs at Asn-437. Residues Asn-527 and Asn-537 are each glycosylated (N-linked (GlcNAc...) asparagine). The helical transmembrane segment at 593-613 threads the bilayer; it reads SIWAILVSVFILVLGVIMFYL. Residues 614 to 966 are Cytoplasmic-facing; that stretch reads RQRMSKNRAV…VSDHLTQTRL (353 aa). Residues 656–934 form the Protein kinase domain; sequence LVDKNIVGHG…TMNEVVQLLI (279 aa). ATP-binding positions include 662–670 and Lys-684; that span reads VGHGGSGTV. 2 positions are modified to phosphotyrosine: Tyr-738 and Tyr-775. The active-site Proton acceptor is Asp-788. Phosphotyrosine occurs at positions 831 and 838. A disordered region spans residues 937–966; sequence TPQGGPDMTSKPTTKIKDSIVSDHLTQTRL.

Belongs to the protein kinase superfamily. Ser/Thr protein kinase family. As to quaternary structure, interacts with the root-derived peptides CEP1, CEP3 and CEP5. As to expression, expressed in the vasculature, especially in phloem and procambium regions, of stems, leaves, cotyledons, sepals, pedals, pedicels, hypocotyls and roots (in primary and lateral roots, but not in root tips). Expressed in the root from the basal meristem onward. Present in the phloem pole pericycle and in the adjacent phloem.

The protein localises to the cell membrane. The catalysed reaction is L-tyrosyl-[protein] + ATP = O-phospho-L-tyrosyl-[protein] + ADP + H(+). Functionally, receptor kinase involved in the perception of C-terminally encoded plant signaling peptide (CEP) and subsequent regulation of root and shoot development. Required for xylem and phloem cell files morphology and organization, probably by preventing ectopic lignification in phloem cells. Together with CEPR2, mediates systemic nitrogen (N)-demand signaling upon the perception of root-derived peptides (e.g. CEP1) via the up-regulation of genes involved in N uptake and assimilation pathways. Positively regulates lateral root initiation and development; probably repressed by the signaling peptide CEP5. In Arabidopsis thaliana (Mouse-ear cress), this protein is Receptor protein-tyrosine kinase CEPR1.